The following is a 514-amino-acid chain: 2,3-bisphosphoglycerate-independent phosphoglycerate mutase (514 aa).

Positions 14 and 64 each coordinate Mn(2+). The active-site Phosphoserine intermediate is Ser64. Substrate is bound by residues His125, 155 to 156 (RD), Arg187, Arg193, 263 to 266 (RADR), and Lys336. Residues Asp403, His407, Asp444, His445, and His463 each coordinate Mn(2+).

Belongs to the BPG-independent phosphoglycerate mutase family. Monomer. The cofactor is Mn(2+).

It carries out the reaction (2R)-2-phosphoglycerate = (2R)-3-phosphoglycerate. It participates in carbohydrate degradation; glycolysis; pyruvate from D-glyceraldehyde 3-phosphate: step 3/5. Its function is as follows. Catalyzes the interconversion of 2-phosphoglycerate and 3-phosphoglycerate. In Escherichia coli O6:H1 (strain CFT073 / ATCC 700928 / UPEC), this protein is 2,3-bisphosphoglycerate-independent phosphoglycerate mutase.